The chain runs to 311 residues: GTPase Era (311 aa).

The 168-residue stretch at 18–185 (RSGFVALIGA…AKYLAESVPN (168 aa)) folds into the Era-type G domain. A G1 region spans residues 26 to 33 (GAPNAGKS). 26–33 (GAPNAGKS) contributes to the GTP binding site. The G2 stretch occupies residues 52 to 56 (QTTRA). Residues 73–76 (DTPG) are G3. GTP contacts are provided by residues 73–77 (DTPGI) and 135–138 (NKVD). A G4 region spans residues 135-138 (NKVD). Positions 164-166 (ISA) are G5. The 78-residue stretch at 216 to 293 (LHEELPYAST…HQFLFVKVRE (78 aa)) folds into the KH type-2 domain.

Belongs to the TRAFAC class TrmE-Era-EngA-EngB-Septin-like GTPase superfamily. Era GTPase family. In terms of assembly, monomer.

Its subcellular location is the cytoplasm. The protein resides in the cell inner membrane. Functionally, an essential GTPase that binds both GDP and GTP, with rapid nucleotide exchange. Plays a role in 16S rRNA processing and 30S ribosomal subunit biogenesis and possibly also in cell cycle regulation and energy metabolism. The sequence is that of GTPase Era from Brucella melitensis biotype 1 (strain ATCC 23456 / CCUG 17765 / NCTC 10094 / 16M).